Consider the following 157-residue polypeptide: Heat shock protein beta-9 (157 aa).

Residues 1–17 show a composition bias toward low complexity; that stretch reads MQRVGSSLPSGSQSASQ. Disordered regions lie at residues 1-20 and 136-157; these read MQRV…QCPS and PPSE…KKLA. Positions 35–148 constitute a sHSP domain; it reads QRLTEDAAAV…EAQTGPASRF (114 aa). A compositionally biased stretch (basic residues) spans 148-157; it reads FRSRGSKKLA.

This sequence belongs to the small heat shock protein (HSP20) family.

The protein resides in the cytoplasm. It localises to the nucleus. This chain is Heat shock protein beta-9 (HSPB9), found in Bos taurus (Bovine).